Here is a 409-residue protein sequence, read N- to C-terminus: tRNA-specific 2-thiouridylase MnmA (409 aa).

ATP contacts are provided by residues 40–47 and Leu-66; that span reads GLSGGVDS. The active-site Nucleophile is Cys-127. A disulfide bridge connects residues Cys-127 and Cys-237. Gly-152 contributes to the ATP binding site. A disordered region spans residues 156 to 179; sequence RIRHREDPEPQQALPGDSSGRHQL. The segment at 187-189 is interaction with tRNA; the sequence is KDQ. Catalysis depends on Cys-237, which acts as the Cysteine persulfide intermediate. The interaction with tRNA stretch occupies residues 342–343; the sequence is RY.

The protein belongs to the MnmA/TRMU family.

It is found in the cytoplasm. The catalysed reaction is S-sulfanyl-L-cysteinyl-[protein] + uridine(34) in tRNA + AH2 + ATP = 2-thiouridine(34) in tRNA + L-cysteinyl-[protein] + A + AMP + diphosphate + H(+). Catalyzes the 2-thiolation of uridine at the wobble position (U34) of tRNA, leading to the formation of s(2)U34. The chain is tRNA-specific 2-thiouridylase MnmA from Prochlorococcus marinus (strain MIT 9303).